Here is a 417-residue protein sequence, read N- to C-terminus: MTAFKSDFLNILQERGFIHQCSDFEGLDALAAKGEATAYVGYDCTARSLHIGNYLTMMMLHWLQQSGNKPITLMGGGTTMVGDPSGKDETRAMRTVAEIEANKESIRGVFAKVLRYGDGKSDAVMLDNAEWLTKLNWIEMLRDVGRHFSVNRMLTMDSVRLRLEREQEMSFIEFNYMVCQAYDFVELAKRTGCKLQMGGSDQWGNIIMGVDLGRRMGTHQLFALTTPLLTTASGAKMGKTAQGAVWLNADQFSPYDFWQYWRNTEDADVGKFLKLFTTLPMSEIGKLEALGGSEINEAKKVLATEATALLHGRDAANEAAETARRTFEEGALAESLPTVEIPRGELDAGFGVLNAFVKAGLVASNGEARRQIKGGGLRVNDEPVTDDKMALSAAHLTPEGVIKLSFGKKKHILIKPA.

Position 39 (tyrosine 39) interacts with L-tyrosine. The 'HIGH' region signature appears at 44-53 (CTARSLHIGN). Positions 176 and 180 each coordinate L-tyrosine. The short motif at 236 to 240 (KMGKT) is the 'KMSKS' region element. Lysine 239 provides a ligand contact to ATP. The 68-residue stretch at 350–417 (FGVLNAFVKA…KKKHILIKPA (68 aa)) folds into the S4 RNA-binding domain.

Belongs to the class-I aminoacyl-tRNA synthetase family. TyrS type 1 subfamily. Homodimer.

It is found in the cytoplasm. The enzyme catalyses tRNA(Tyr) + L-tyrosine + ATP = L-tyrosyl-tRNA(Tyr) + AMP + diphosphate + H(+). Catalyzes the attachment of tyrosine to tRNA(Tyr) in a two-step reaction: tyrosine is first activated by ATP to form Tyr-AMP and then transferred to the acceptor end of tRNA(Tyr). In Bradyrhizobium diazoefficiens (strain JCM 10833 / BCRC 13528 / IAM 13628 / NBRC 14792 / USDA 110), this protein is Tyrosine--tRNA ligase.